The sequence spans 345 residues: MNYKLFSPYTIKDVTLKNRIVMSPMCMYSSENGDGQVTNFHLIHYGTRAAGQVGLVMIEATAVLPEGRISNKDLGIWDDSLIEGLHKTTTFIHDNGAKAAIQLAHAGRKAELETDALAPSAIPFNETMKMPIEMSKHQIKDTVLAFQQAAVRSKQAGFDVIEIHGAHGYLINEFLSPLTNKRTDEYGGSPENRYRFLREIIDSINEVWNGPLFVRISANDYHPDGLTVQDYVQYTKWMKEQGVDLIDCSSGAVVPARIDVYPGYQVQYAKHIKEHANIATGAVGLITTGAQAEQILNNNEADLIFIGRELLRNPYFPRIAANELGFELEEPYQYERAPGKISTNK.

23-26 (SPMC) contacts FMN. Position 28 (Tyr-28) interacts with substrate. Positions 60 and 102 each coordinate FMN. 164–167 (HGAH) is a substrate binding site. FMN-binding positions include Arg-215 and 307 to 308 (GR).

It belongs to the NADH:flavin oxidoreductase/NADH oxidase family. NamA subfamily. In terms of assembly, homotetramer. The cofactor is FMN.

It carries out the reaction A + NADPH + H(+) = AH2 + NADP(+). Functionally, catalyzes the reduction of the double bond of an array of alpha,beta-unsaturated aldehydes and ketones. It also reduces the nitro group of nitroester and nitroaromatic compounds. It could have a role in detoxification processes. In Bacillus cereus (strain ATCC 10987 / NRS 248), this protein is NADPH dehydrogenase.